The primary structure comprises 221 residues: Serotriflin (221 aa).

The SCP domain maps to 19-147; the sequence is LDKHNALRRS…SYNYYYVCHY (129 aa). N-linked (GlcNAc...) asparagine glycosylation is present at Asn48. Intrachain disulfides connect Cys56–Cys134, Cys73–Cys148, Cys129–Cys145, Cys167–Cys174, Cys170–Cys179, Cys183–Cys216, Cys192–Cys210, and Cys201–Cys214. The region spanning 183–216 is the ShKT domain; the sequence is CKHVDRYSNCNSLVQQISCQSNNMNTDCPASCFC.

In terms of assembly, forms a stable, non-covalent complex with SSP-2.

Its subcellular location is the secreted. In Protobothrops flavoviridis (Habu), this protein is Serotriflin.